Here is a 198-residue protein sequence, read N- to C-terminus: Thymidylate kinase (198 aa).

Residue 10-17 (GLDGSGKT) coordinates ATP.

This sequence belongs to the thymidylate kinase family.

It carries out the reaction dTMP + ATP = dTDP + ADP. Phosphorylation of dTMP to form dTDP in both de novo and salvage pathways of dTTP synthesis. This is Thymidylate kinase from Thermus thermophilus (strain ATCC BAA-163 / DSM 7039 / HB27).